The chain runs to 601 residues: Glutamine--tRNA ligase (601 aa).

A 'HIGH' region motif is present at residues 76 to 86 (PEPNGYLHIGH). Residues 77–79 (EPN) and 83–89 (HIGHAKS) contribute to the ATP site. L-glutamine contacts are provided by Asp109 and Tyr253. Residues Thr272, 301-302 (RL), and 309-311 (MSK) each bind ATP. Residues 308 to 312 (VMSKR) carry the 'KMSKS' region motif.

The protein belongs to the class-I aminoacyl-tRNA synthetase family. Monomer.

It localises to the cytoplasm. It catalyses the reaction tRNA(Gln) + L-glutamine + ATP = L-glutaminyl-tRNA(Gln) + AMP + diphosphate. The protein is Glutamine--tRNA ligase of Rhodopirellula baltica (strain DSM 10527 / NCIMB 13988 / SH1).